Consider the following 238-residue polypeptide: Ribosomal RNA small subunit methyltransferase E 1 (238 aa).

This sequence belongs to the RNA methyltransferase RsmE family.

The protein localises to the cytoplasm. The enzyme catalyses uridine(1498) in 16S rRNA + S-adenosyl-L-methionine = N(3)-methyluridine(1498) in 16S rRNA + S-adenosyl-L-homocysteine + H(+). Specifically methylates the N3 position of the uracil ring of uridine 1498 (m3U1498) in 16S rRNA. Acts on the fully assembled 30S ribosomal subunit. This chain is Ribosomal RNA small subunit methyltransferase E 1 (rsmE1), found in Borreliella burgdorferi (strain ATCC 35210 / DSM 4680 / CIP 102532 / B31) (Borrelia burgdorferi).